The sequence spans 463 residues: ATP synthase subunit beta (463 aa).

Gly-152–Thr-159 is an ATP binding site.

The protein belongs to the ATPase alpha/beta chains family. F-type ATPases have 2 components, CF(1) - the catalytic core - and CF(0) - the membrane proton channel. CF(1) has five subunits: alpha(3), beta(3), gamma(1), delta(1), epsilon(1). CF(0) has three main subunits: a(1), b(2) and c(9-12). The alpha and beta chains form an alternating ring which encloses part of the gamma chain. CF(1) is attached to CF(0) by a central stalk formed by the gamma and epsilon chains, while a peripheral stalk is formed by the delta and b chains.

Its subcellular location is the cell inner membrane. It catalyses the reaction ATP + H2O + 4 H(+)(in) = ADP + phosphate + 5 H(+)(out). Produces ATP from ADP in the presence of a proton gradient across the membrane. The catalytic sites are hosted primarily by the beta subunits. The sequence is that of ATP synthase subunit beta from Shewanella denitrificans (strain OS217 / ATCC BAA-1090 / DSM 15013).